We begin with the raw amino-acid sequence, 190 residues long: Peptide methionine sulfoxide reductase MsrA (190 aa).

The active site involves C21.

The protein belongs to the MsrA Met sulfoxide reductase family.

The enzyme catalyses L-methionyl-[protein] + [thioredoxin]-disulfide + H2O = L-methionyl-(S)-S-oxide-[protein] + [thioredoxin]-dithiol. It carries out the reaction [thioredoxin]-disulfide + L-methionine + H2O = L-methionine (S)-S-oxide + [thioredoxin]-dithiol. Has an important function as a repair enzyme for proteins that have been inactivated by oxidation. Catalyzes the reversible oxidation-reduction of methionine sulfoxide in proteins to methionine. The chain is Peptide methionine sulfoxide reductase MsrA from Polynucleobacter asymbioticus (strain DSM 18221 / CIP 109841 / QLW-P1DMWA-1) (Polynucleobacter necessarius subsp. asymbioticus).